The sequence spans 162 residues: Peptidyl-prolyl cis-trans isomerase (162 aa).

The region spanning lysine 16–leucine 162 is the PPIase cyclophilin-type domain.

It belongs to the cyclophilin-type PPIase family.

The catalysed reaction is [protein]-peptidylproline (omega=180) = [protein]-peptidylproline (omega=0). Functionally, PPIases accelerate the folding of proteins. It catalyzes the cis-trans isomerization of proline imidic peptide bonds in oligopeptides. The protein is Peptidyl-prolyl cis-trans isomerase (ppiA) of Helicobacter pylori (strain J99 / ATCC 700824) (Campylobacter pylori J99).